Here is a 618-residue protein sequence, read N- to C-terminus: 1-deoxy-D-xylulose-5-phosphate synthase (618 aa).

Residues His77 and 118-120 contribute to the thiamine diphosphate site; that span reads GHS. Residue Asp149 coordinates Mg(2+). Residues 150-151, Asn178, Tyr285, and Glu367 each bind thiamine diphosphate; that span reads GA. Asn178 lines the Mg(2+) pocket.

It belongs to the transketolase family. DXPS subfamily. In terms of assembly, homodimer. Mg(2+) serves as cofactor. Thiamine diphosphate is required as a cofactor.

The enzyme catalyses D-glyceraldehyde 3-phosphate + pyruvate + H(+) = 1-deoxy-D-xylulose 5-phosphate + CO2. Its pathway is metabolic intermediate biosynthesis; 1-deoxy-D-xylulose 5-phosphate biosynthesis; 1-deoxy-D-xylulose 5-phosphate from D-glyceraldehyde 3-phosphate and pyruvate: step 1/1. Functionally, catalyzes the acyloin condensation reaction between C atoms 2 and 3 of pyruvate and glyceraldehyde 3-phosphate to yield 1-deoxy-D-xylulose-5-phosphate (DXP). The polypeptide is 1-deoxy-D-xylulose-5-phosphate synthase (Idiomarina loihiensis (strain ATCC BAA-735 / DSM 15497 / L2-TR)).